The sequence spans 312 residues: tRNA dimethylallyltransferase (312 aa).

Residue 19 to 26 (GPSGSGKS) coordinates ATP. Residue 21-26 (SGSGKS) participates in substrate binding. The tract at residues 44–47 (DSLS) is interaction with substrate tRNA.

The protein belongs to the IPP transferase family. Monomer. The cofactor is Mg(2+).

The enzyme catalyses adenosine(37) in tRNA + dimethylallyl diphosphate = N(6)-dimethylallyladenosine(37) in tRNA + diphosphate. Functionally, catalyzes the transfer of a dimethylallyl group onto the adenine at position 37 in tRNAs that read codons beginning with uridine, leading to the formation of N6-(dimethylallyl)adenosine (i(6)A). The protein is tRNA dimethylallyltransferase of Helicobacter pylori (strain J99 / ATCC 700824) (Campylobacter pylori J99).